The following is a 340-amino-acid chain: Ferrochelatase (340 aa).

Residues H189 and E292 each contribute to the Fe cation site.

This sequence belongs to the ferrochelatase family.

The protein localises to the cytoplasm. The enzyme catalyses heme b + 2 H(+) = protoporphyrin IX + Fe(2+). It functions in the pathway porphyrin-containing compound metabolism; protoheme biosynthesis; protoheme from protoporphyrin-IX: step 1/1. Catalyzes the ferrous insertion into protoporphyrin IX. The polypeptide is Ferrochelatase (Pseudomonas savastanoi pv. phaseolicola (strain 1448A / Race 6) (Pseudomonas syringae pv. phaseolicola (strain 1448A / Race 6))).